Consider the following 296-residue polypeptide: Phosphatidylglycerol--prolipoprotein diacylglyceryl transferase (296 aa).

A run of 4 helical transmembrane segments spans residues 10 to 30 (IAFSLGPVKVHWYGLMYLAAF), 57 to 77 (LLFYGMLGVVLGGRIGYMLFY), 92 to 112 (VWEGGMSFHGGLLGVLVACWL), and 119 to 139 (LHFFDVMDFVAPLVPLGLGFG). Arg-140 serves as a coordination point for a 1,2-diacyl-sn-glycero-3-phospho-(1'-sn-glycerol). Transmembrane regions (helical) follow at residues 194-214 (QLYEAALEGVVMFVVLWTFSM), 220-240 (YALSGLFALLYGVFRFIVEFV), and 254-274 (WLTMGQILSLPLIAVGLALLA).

Belongs to the Lgt family.

Its subcellular location is the cell inner membrane. The enzyme catalyses L-cysteinyl-[prolipoprotein] + a 1,2-diacyl-sn-glycero-3-phospho-(1'-sn-glycerol) = an S-1,2-diacyl-sn-glyceryl-L-cysteinyl-[prolipoprotein] + sn-glycerol 1-phosphate + H(+). It functions in the pathway protein modification; lipoprotein biosynthesis (diacylglyceryl transfer). Its function is as follows. Catalyzes the transfer of the diacylglyceryl group from phosphatidylglycerol to the sulfhydryl group of the N-terminal cysteine of a prolipoprotein, the first step in the formation of mature lipoproteins. The chain is Phosphatidylglycerol--prolipoprotein diacylglyceryl transferase from Xanthomonas oryzae pv. oryzae (strain MAFF 311018).